A 983-amino-acid polypeptide reads, in one-letter code: Polyhomeotic-like protein 3 (983 aa).

Disordered regions lie at residues Met-1–Pro-34, Leu-103–Ser-149, Val-225–Thr-283, Leu-313–Gln-332, Leu-339–Pro-410, Pro-477–Pro-509, and Asp-601–Ile-620. Composition is skewed to low complexity over residues Thr-9 to Ser-29 and Leu-103 to Ser-126. The span at Ile-127–Ile-139 shows a compositional bias: polar residues. Over residues Ser-140–Ser-149 the composition is skewed to low complexity. Residues Val-225 to Ile-257 are compositionally biased toward polar residues. Over residues Ser-258–Glu-271 the composition is skewed to basic and acidic residues. Residues Ser-263 and Ser-272 each carry the phosphoserine modification. The span at Ser-274–Thr-283 shows a compositional bias: polar residues. Phosphoserine is present on Ser-315. Over residues Ser-365–Thr-383 the composition is skewed to polar residues. The segment covering Val-384 to Val-398 has biased composition (low complexity). The span at Pro-477–Tyr-489 shows a compositional bias: polar residues. The segment covering Ser-490–Ser-506 has biased composition (low complexity). Residues Thr-609 and Thr-614 each carry the phosphothreonine modification. Position 616 is a phosphoserine (Ser-616). Glycyl lysine isopeptide (Lys-Gly) (interchain with G-Cter in SUMO2) cross-links involve residues Lys-691 and Lys-732. An HD1 motif is present at residues Lys-691–Val-720. A phosphoserine mark is found at Ser-761 and Ser-762. Residues Glu-776–Lys-810 form an FCS-type zinc finger. Cys-785, Cys-788, Cys-804, and Cys-808 together coordinate Zn(2+). Residue Lys-810 forms a Glycyl lysine isopeptide (Lys-Gly) (interchain with G-Cter in SUMO2) linkage. Disordered regions lie at residues Arg-827–Ala-847 and Glu-864–Glu-889. The SAM domain occupies Trp-919–Ser-983.

Component of a PRC1-like complex.

It localises to the nucleus. In terms of biological role, component of a Polycomb group (PcG) multiprotein PRC1-like complex, a complex class required to maintain the transcriptionally repressive state of many genes, including Hox genes, throughout development. PcG PRC1 complex acts via chromatin remodeling and modification of histones; it mediates monoubiquitination of histone H2A 'Lys-119', rendering chromatin heritably changed in its expressibility. The sequence is that of Polyhomeotic-like protein 3 (PHC3) from Homo sapiens (Human).